Here is a 319-residue protein sequence, read N- to C-terminus: Olfactory receptor 8U8 (319 aa).

Topologically, residues 1–28 (MAHINCTQATEFILVGLTDHQELKMPLF) are extracellular. Asparagine 5 carries an N-linked (GlcNAc...) asparagine glycan. Residues 29-49 (VLFLSIYLFTVVGNLGLILLI) form a helical membrane-spanning segment. Residues 50–56 (RADTSLN) lie on the Cytoplasmic side of the membrane. The helical transmembrane segment at 57 to 77 (TPMYFFLSNLAFVDFCYSSVI) threads the bilayer. The Extracellular segment spans residues 78-97 (TPKMLGNFLYKQNVISFDAC). Cysteine 97 and cysteine 179 are oxidised to a cystine. A helical transmembrane segment spans residues 98-118 (ATQLGCFLTFMVSESLLLASM). The Cytoplasmic portion of the chain corresponds to 119–122 (AYDR). A helical membrane pass occupies residues 123-143 (YVAICNPLLYMVVMTPGICIQ). Topologically, residues 144 to 204 (LVAVPYSYSF…KQLWILACAG (61 aa)) are extracellular. Residues 205 to 225 (ITFICSVLIVFVSYMFIIFAI) form a helical membrane-spanning segment. The Cytoplasmic portion of the chain corresponds to 226 to 239 (LRMSSAEGRRKAFS). A helical transmembrane segment spans residues 240-260 (TCSSHMLAVTIFYGTLIFMYL). The Extracellular segment spans residues 261-271 (QPSSSHSLDAD). Residues 272 to 292 (KMASVFYTVIIPMLNPLIYSL) traverse the membrane as a helical segment. The Cytoplasmic portion of the chain corresponds to 293–319 (RNKDVKDALKKVIINRNHAFIFLKLRK).

This sequence belongs to the G-protein coupled receptor 1 family.

The protein resides in the cell membrane. Odorant receptor. This is Olfactory receptor 8U8 (OR8U8) from Homo sapiens (Human).